Consider the following 66-residue polypeptide: uncharacterized protein (66 aa).

To E.coli YfhJ.

This is an uncharacterized protein from Pseudomonas aeruginosa (strain ATCC 15692 / DSM 22644 / CIP 104116 / JCM 14847 / LMG 12228 / 1C / PRS 101 / PAO1).